Consider the following 97-residue polypeptide: Nucleoid-associated protein Hac_0048 (97 aa).

This sequence belongs to the YbaB/EbfC family. In terms of assembly, homodimer.

Its subcellular location is the cytoplasm. It is found in the nucleoid. Functionally, binds to DNA and alters its conformation. May be involved in regulation of gene expression, nucleoid organization and DNA protection. This Helicobacter acinonychis (strain Sheeba) protein is Nucleoid-associated protein Hac_0048.